The primary structure comprises 501 residues: Lysine--tRNA ligase (501 aa).

Glu-411 and Glu-418 together coordinate Mg(2+).

Belongs to the class-II aminoacyl-tRNA synthetase family. As to quaternary structure, homodimer. Mg(2+) is required as a cofactor.

It is found in the cytoplasm. It catalyses the reaction tRNA(Lys) + L-lysine + ATP = L-lysyl-tRNA(Lys) + AMP + diphosphate. This Pseudomonas aeruginosa (strain LESB58) protein is Lysine--tRNA ligase.